Consider the following 370-residue polypeptide: Mitogen-activated protein kinase 3 (370 aa).

In terms of domain architecture, Protein kinase spans 38–324 (RPPIIPIGRG…VEQALNHQYL (287 aa)). ATP is bound by residues 44-52 (IGRGAYGIV) and lysine 67. Aspartate 164 (proton acceptor) is an active-site residue. Position 196 is a phosphothreonine (threonine 196). Residues 196–198 (TEY) carry the TXY motif. The residue at position 198 (tyrosine 198) is a Phosphotyrosine. Threonine 201 is subject to Phosphothreonine.

This sequence belongs to the protein kinase superfamily. CMGC Ser/Thr protein kinase family. MAP kinase subfamily. In terms of assembly, interacts with DSPTP1B/MKP2, NDPK2 and VIP1. The interaction with DSPTP1B/MKP2 is repressed by fungal elicitation. Binds to LIP5. Interacts with VQ4. Interacts with RACK1A, RACK1B and RACK1C. Interacts with FLZ9. Interacts with MKK5. In terms of processing, dually phosphorylated on Thr-196 and Tyr-198, which activates the enzyme. Dephosphorylated by DSPTP1B/MKP2.

It is found in the cytoplasm. It localises to the nucleus. The protein localises to the cell cortex. It catalyses the reaction L-seryl-[protein] + ATP = O-phospho-L-seryl-[protein] + ADP + H(+). The enzyme catalyses L-threonyl-[protein] + ATP = O-phospho-L-threonyl-[protein] + ADP + H(+). Its activity is regulated as follows. Activated by threonine and tyrosine phosphorylation. Activated by MAP kinase kinases MKK4, MKK5, MKK7 and MKK9. Activated in response to hydrogen peroxide, ozone, salt stress and flagellin bacterial elicitor. Triggered by Agrobacterium upon T-DNA transfer. Repressed by DSPTP1B/MKP2-mediated dephosphorylation. Involved in oxidative stress-mediated signaling cascade (such as ozone). Involved in the innate immune MAP kinase signaling cascade (MEKK1, MKK4/MKK5 and MPK3/MPK6) downstream of bacterial flagellin receptor FLS2. May be involved in hypersensitive response (HR)-mediated signaling cascade by modulating LIP5 phosphorylation and subsequent multivesicular bodies (MVBs) trafficking. May phosphorylate regulators of WRKY transcription factors. Mediates the phosphorylation of VIP1 and subsequent stress genes transcription in response to Agrobacterium. MKK9-MPK3/MPK6 module phosphorylates and activates EIN3, leading to the promotion of EIN3-mediated transcription in ethylene signaling. MPK3/MPK6 cascade regulates camalexin synthesis through transcriptional regulation of the biosynthetic genes after pathogen infection. YDA-MKK4/MKK5-MPK3/MPK6 module regulates stomatal cell fate before the guard mother cell (GMC) is specified. When activated, reinforces the feedback loop by phosphorylating BASL, and inhibits stomatal fate by phosphorylating SPCH. This MAPK cascade also functions downstream of the ER receptor in regulating coordinated local cell proliferation, which shapes the morphology of plant organs. This chain is Mitogen-activated protein kinase 3, found in Arabidopsis thaliana (Mouse-ear cress).